An 802-amino-acid polypeptide reads, in one-letter code: Copper-exporting P-type ATPase (802 aa).

HMA domains are found at residues 5-70 and 72-138; these read KKTT…YGVA and ETVE…YDAS. Cu(+) contacts are provided by C16, C19, C83, and C86. 6 consecutive transmembrane segments (helical) span residues 161–181, 192–212, 224–244, 256–276, 411–431, and 438–458; these read LIIS…HLFN, WFQF…FYVG, MDVL…YEMV, LYFE…YLEA, YFVP…ITLV, and PALV…LGLA. Catalysis depends on D495, which acts as the 4-aspartylphosphate intermediate. D690 and D694 together coordinate Mg(2+). Helical transmembrane passes span 748 to 767 and 771 to 790; these read LFWA…LGLL and VAGA…ALRL.

It belongs to the cation transport ATPase (P-type) (TC 3.A.3) family. Type IB subfamily.

The protein localises to the cell membrane. The catalysed reaction is Cu(+)(in) + ATP + H2O = Cu(+)(out) + ADP + phosphate + H(+). Involved in copper export. In Staphylococcus aureus (strain MRSA252), this protein is Copper-exporting P-type ATPase (copA).